Reading from the N-terminus, the 304-residue chain is Dihydroorotate dehydrogenase B (NAD(+)), catalytic subunit (304 aa).

Residues Ser-21 and 45 to 46 (KA) contribute to the FMN site. Residues Lys-45 and 69–73 (NAIGL) contribute to the substrate site. FMN contacts are provided by Asn-99 and Asn-127. Substrate is bound at residue Asn-127. Catalysis depends on Cys-130, which acts as the Nucleophile. FMN is bound by residues Lys-165 and Ile-191. 192–193 (NT) provides a ligand contact to substrate. Residues Gly-217, 243 to 244 (GG), and 265 to 266 (GT) each bind FMN.

The protein belongs to the dihydroorotate dehydrogenase family. Type 1 subfamily. Heterotetramer of 2 PyrK and 2 PyrD type B subunits. Requires FMN as cofactor.

The protein localises to the cytoplasm. It catalyses the reaction (S)-dihydroorotate + NAD(+) = orotate + NADH + H(+). It participates in pyrimidine metabolism; UMP biosynthesis via de novo pathway; orotate from (S)-dihydroorotate (NAD(+) route): step 1/1. Catalyzes the conversion of dihydroorotate to orotate with NAD(+) as electron acceptor. This Listeria monocytogenes serotype 4b (strain F2365) protein is Dihydroorotate dehydrogenase B (NAD(+)), catalytic subunit (pyrD).